We begin with the raw amino-acid sequence, 583 residues long: Chitinase 2 (583 aa).

Positions 1–19 (MLSFKSLLAAAVVASSALA) are cleaved as a signal peptide. Residues 23–305 (NQVALYWGQN…VQVKNVLNQN (283 aa)) enclose the GH18 domain. Residue E153 is the Proton donor of the active site. N370, N546, and N549 each carry an N-linked (GlcNAc...) asparagine glycan. A lipid anchor (GPI-anchor amidated glycine) is attached at G560. Residues 561–583 (AAVANSLNSVWFTVPFLLAAFAF) constitute a propeptide, removed in mature form.

Belongs to the glycosyl hydrolase 18 family. Chitinase class III subfamily. In terms of processing, the GPI-anchor is attached to the protein in the endoplasmic reticulum and serves to target the protein to the cell surface. There, the glucosamine-inositol phospholipid moiety is cleaved off and the GPI-modified mannoprotein is covalently attached via its lipidless GPI glycan remnant to the 1,6-beta-glucan of the outer cell wall layer. Post-translationally, proteolytic cleavage by SAP9 and SAP10 leads to the cell wall release of CHT2 and increased chitinase activity, suggesting a direct influence of SAP9 and SAP10 on CHT2 function.

It is found in the secreted. The protein resides in the cell wall. It localises to the membrane. It catalyses the reaction Random endo-hydrolysis of N-acetyl-beta-D-glucosaminide (1-&gt;4)-beta-linkages in chitin and chitodextrins.. In terms of biological role, chitinase involved in the remodeling of chitin in the fungal cell wall. Plays a role in cell separation. This Candida albicans (strain SC5314 / ATCC MYA-2876) (Yeast) protein is Chitinase 2 (CHT2).